The chain runs to 228 residues: Putative N-acetylmannosamine-6-phosphate 2-epimerase (228 aa).

It belongs to the NanE family.

The enzyme catalyses an N-acyl-D-glucosamine 6-phosphate = an N-acyl-D-mannosamine 6-phosphate. It participates in amino-sugar metabolism; N-acetylneuraminate degradation; D-fructose 6-phosphate from N-acetylneuraminate: step 3/5. Converts N-acetylmannosamine-6-phosphate (ManNAc-6-P) to N-acetylglucosamine-6-phosphate (GlcNAc-6-P). In Pasteurella multocida (strain Pm70), this protein is Putative N-acetylmannosamine-6-phosphate 2-epimerase.